We begin with the raw amino-acid sequence, 227 residues long: Orotate phosphoribosyltransferase (227 aa).

The 5-phospho-alpha-D-ribose 1-diphosphate site is built by Lys51, Arg119, Lys120, and Lys123. Orotate contacts are provided by Thr149 and Arg177.

It belongs to the purine/pyrimidine phosphoribosyltransferase family. PyrE subfamily. In terms of assembly, homodimer. Expressed in body wall muscles, spermatheca and vulva muscles.

The enzyme catalyses orotidine 5'-phosphate + diphosphate = orotate + 5-phospho-alpha-D-ribose 1-diphosphate. It catalyses the reaction UMP + diphosphate = 5-phospho-alpha-D-ribose 1-diphosphate + uracil. The protein operates within pyrimidine metabolism; UMP biosynthesis via de novo pathway; UMP from orotate: step 1/2. It functions in the pathway pyrimidine metabolism; UMP biosynthesis via salvage pathway; UMP from uracil: step 1/1. Functionally, phosphoribosyltransferase which catalyzes the formation of UMP from uracil in vitro and thus may be involved in UMP biosynthesis via the salvage pathway. May also participate in the first step of UMP synthesis by catalyzing the formation of orotidine 5'-phosphate, a UMP precursor, from orotate. In Caenorhabditis elegans, this protein is Orotate phosphoribosyltransferase.